A 198-amino-acid chain; its full sequence is Small ribosomal subunit protein uS2 (198 aa).

The protein belongs to the universal ribosomal protein uS2 family.

In Methanobrevibacter smithii (strain ATCC 35061 / DSM 861 / OCM 144 / PS), this protein is Small ribosomal subunit protein uS2.